Consider the following 99-residue polypeptide: Ubiquitin-related modifier 1 homolog 2 (99 aa).

Residue Gly-99 is modified to 1-thioglycine. Gly-99 participates in a covalent cross-link: Glycyl lysine isopeptide (Gly-Lys) (interchain with K-? in acceptor proteins).

This sequence belongs to the URM1 family. In terms of processing, C-terminal thiocarboxylation occurs in 2 steps, it is first acyl-adenylated (-COAMP) via the hesA/moeB/thiF part of the MOCS3 homolog, then thiocarboxylated (-COSH) via the rhodanese domain of the MOCS3 homolog.

It localises to the cytoplasm. It functions in the pathway tRNA modification; 5-methoxycarbonylmethyl-2-thiouridine-tRNA biosynthesis. Functionally, acts as a sulfur carrier required for 2-thiolation of mcm(5)S(2)U at tRNA wobble positions of cytosolic tRNA(Lys), tRNA(Glu) and tRNA(Gln). Serves as sulfur donor in tRNA 2-thiolation reaction by being thiocarboxylated (-COSH) at its C-terminus by MOCS3. The sulfur is then transferred to tRNA to form 2-thiolation of mcm(5)S(2)U. Also acts as a ubiquitin-like protein (UBL) that is covalently conjugated via an isopeptide bond to lysine residues of target proteins. The thiocarboxylated form serves as substrate for conjugation and oxidative stress specifically induces the formation of UBL-protein conjugates. The chain is Ubiquitin-related modifier 1 homolog 2 from Arabidopsis thaliana (Mouse-ear cress).